The following is a 328-amino-acid chain: Malate dehydrogenase 1 (328 aa).

NAD(+) is bound at residue 12–18; that stretch reads GAAGQIA. Residues arginine 93 and arginine 99 each contribute to the substrate site. Residues asparagine 106, glutamine 113, and 130–132 each bind NAD(+); that span reads VGN. Positions 132 and 163 each coordinate substrate. Histidine 188 functions as the Proton acceptor in the catalytic mechanism.

It belongs to the LDH/MDH superfamily. MDH type 2 family.

It catalyses the reaction (S)-malate + NAD(+) = oxaloacetate + NADH + H(+). In terms of biological role, catalyzes the reversible oxidation of malate to oxaloacetate. In Burkholderia vietnamiensis (strain G4 / LMG 22486) (Burkholderia cepacia (strain R1808)), this protein is Malate dehydrogenase 1.